The following is a 111-amino-acid chain: Iron-sulfur cluster assembly protein CyaY (111 aa).

The protein belongs to the frataxin family.

Involved in iron-sulfur (Fe-S) cluster assembly. May act as a regulator of Fe-S biogenesis. This is Iron-sulfur cluster assembly protein CyaY from Cupriavidus pinatubonensis (strain JMP 134 / LMG 1197) (Cupriavidus necator (strain JMP 134)).